A 466-amino-acid polypeptide reads, in one-letter code: Asparagine--tRNA ligase (466 aa).

This sequence belongs to the class-II aminoacyl-tRNA synthetase family. Homodimer.

It is found in the cytoplasm. The catalysed reaction is tRNA(Asn) + L-asparagine + ATP = L-asparaginyl-tRNA(Asn) + AMP + diphosphate + H(+). The sequence is that of Asparagine--tRNA ligase from Klebsiella pneumoniae subsp. pneumoniae (strain ATCC 700721 / MGH 78578).